Here is a 443-residue protein sequence, read N- to C-terminus: Cyclic GMP-AMP synthase (443 aa).

Ser61 lines the ATP pocket. Residues Asp78 and Asp80 contribute to the active site. Asp80 contacts Mg(2+). ATP is bound at residue Asn124. Asp138 is a catalytic residue. Asp138 is a Mg(2+) binding site. Residue Leu208 coordinates ATP.

The protein belongs to the CD-NTase family. B06 subfamily. Mg(2+) is required as a cofactor.

It carries out the reaction GTP + ATP = 3',3'-cGAMP + 2 diphosphate. The catalysed reaction is UTP + ATP = 3',3'-cUAMP + 2 diphosphate. The enzyme catalyses 2 ATP = 3',3'-c-di-AMP + 2 diphosphate. It catalyses the reaction 2 GTP = 3',3'-c-di-GMP + 2 diphosphate. It carries out the reaction UTP + GTP = 3',3'-cGMP-UMP + 2 diphosphate. In terms of biological role, cyclic nucleotide synthase (second messenger synthase) of a CBASS antivirus system. CBASS (cyclic oligonucleotide-based antiphage signaling system) provides immunity against bacteriophages. The CD-NTase protein (CdnB, this protein) synthesizes cyclic nucleotides in response to infection; these serve as specific second messenger signals. The signals activate a diverse range of effectors, leading to bacterial cell death and thus abortive phage infection. The effector protein for this system is membrane protein Cap15. Catalyzes the synthesis of 3',3'-cyclic GMP-AMP (3'3'-cGAMP) from GTP and ATP, a second messenger in cell signal transduction. Also makes cyclic UMP-AMP, cyclic UMP-GMP, cyclic di-AMP and cyclic-di-GMP. Functionally, protects E.coli against phage infection. When the CBASS operon (cdnB-cap15) is introduced in E.coli MG1655 there is about 100-fold protection against phage T2 and about 10-fold protection against phage T5 and T6. The sequence is that of Cyclic GMP-AMP synthase from Escherichia albertii.